Here is a 426-residue protein sequence, read N- to C-terminus: D-tagatose-1,6-bisphosphate aldolase subunit KbaZ (426 aa).

It belongs to the GatZ/KbaZ family. KbaZ subfamily. As to quaternary structure, forms a complex with KbaY.

It functions in the pathway carbohydrate metabolism; D-tagatose 6-phosphate degradation; D-glyceraldehyde 3-phosphate and glycerone phosphate from D-tagatose 6-phosphate: step 2/2. Its function is as follows. Component of the tagatose-1,6-bisphosphate aldolase KbaYZ that is required for full activity and stability of the Y subunit. Could have a chaperone-like function for the proper and stable folding of KbaY. When expressed alone, KbaZ does not show any aldolase activity. The protein is D-tagatose-1,6-bisphosphate aldolase subunit KbaZ of Shigella flexneri.